Here is a 329-residue protein sequence, read N- to C-terminus: Solute carrier family 35 member B1 (329 aa).

Helical transmembrane passes span 21–41, 60–80, 91–111, 142–162, 175–195, 220–240, 250–270, and 292–312; these read AVCF…QETI, TLVF…IQFF, WLYG…NSAL, YPMA…LFLY, VFGF…LTGV, TLVL…LAFT, ILLF…TVVY, and VLLF…LVFL. The Di-lysine motif motif lies at 325-329; it reads KKTTH.

This sequence belongs to the nucleotide-sugar transporter family. SLC35B subfamily.

It is found in the endoplasmic reticulum membrane. Its function is as follows. Probable sugar transporter. This is Solute carrier family 35 member B1 (slc35b1) from Danio rerio (Zebrafish).